The following is a 165-amino-acid chain: Nucleotide-binding protein Syncc9902_1708 (165 aa).

The protein belongs to the YajQ family.

Nucleotide-binding protein. This is Nucleotide-binding protein Syncc9902_1708 from Synechococcus sp. (strain CC9902).